Reading from the N-terminus, the 481-residue chain is MDFLLPDFTPAYPEIFLLLMVCVVMLADLFAGERNRYLAFYLSLLTLAGCALVTCGIYSTEVRYTFTGMFVGDAMSDILKLLIYVTVAAVLIYSRSYISTRGLLKGEFFSLALFATLGMMVMVSANHLITLYLGLELLSLSLYAMVALQRESAIATEAAIKFFVLGALASGFLLYGMSMLYGATGTLHLPELAKVIHSGQADHEIFIIGLVFVVAGIGFKLSAVPFHMWAPDIYEGAPTAVTLFIGSAPKFAAFGFVMRLLVGGLGDLVTDWQGMLVLLAVASMAVGNIAAIAQQNIKRMLAYSTISHMGFVLLGFIAAGENGYSSSMFYVIAYVLMTLGAFGIIMLVSREGFEADKISDLKGLNQRNPWLAFMMLLVMFSMAGIPPMIGFYAKLSVLQAVLEAGYIWLVVVAVMLSLIGAFYYLRIIKFMYFDAPEQTQPIMFKPDVKVLVSINGLAIILLGMFPQMLMGLSLSAIQHSM.

The next 14 helical transmembrane spans lie at 11–31, 37–57, 74–94, 103–123, 128–148, 162–182, 205–225, 238–258, 272–292, 300–320, 328–348, 371–391, 405–425, and 457–477; these read AYPEIFLLLMVCVVMLADLFA, YLAFYLSLLTLAGCALVTCGI, AMSDILKLLIYVTVAAVLIYS, LLKGEFFSLALFATLGMMVMV, LITLYLGLELLSLSLYAMVAL, FFVLGALASGFLLYGMSMLYG, IFIIGLVFVVAGIGFKLSAVP, PTAVTLFIGSAPKFAAFGFVM, WQGMLVLLAVASMAVGNIAAI, MLAYSTISHMGFVLLGFIAAG, MFYVIAYVLMTLGAFGIIMLV, LAFMMLLVMFSMAGIPPMIGF, GYIWLVVVAVMLSLIGAFYYL, and LAIILLGMFPQMLMGLSLSAI.

This sequence belongs to the complex I subunit 2 family. NDH-1 is composed of 14 different subunits. Subunits NuoA, H, J, K, L, M, N constitute the membrane sector of the complex.

It localises to the cell inner membrane. It catalyses the reaction a quinone + NADH + 5 H(+)(in) = a quinol + NAD(+) + 4 H(+)(out). NDH-1 shuttles electrons from NADH, via FMN and iron-sulfur (Fe-S) centers, to quinones in the respiratory chain. The immediate electron acceptor for the enzyme in this species is believed to be ubiquinone. Couples the redox reaction to proton translocation (for every two electrons transferred, four hydrogen ions are translocated across the cytoplasmic membrane), and thus conserves the redox energy in a proton gradient. This chain is NADH-quinone oxidoreductase subunit N, found in Nitrosomonas europaea (strain ATCC 19718 / CIP 103999 / KCTC 2705 / NBRC 14298).